Here is a 406-residue protein sequence, read N- to C-terminus: Peptidase T (406 aa).

Position 77 (His77) interacts with Zn(2+). The active site involves Asp79. Asp139 provides a ligand contact to Zn(2+). The active-site Proton acceptor is Glu173. The Zn(2+) site is built by Glu174, Asp196, and His377.

It belongs to the peptidase M20B family. Requires Zn(2+) as cofactor.

It is found in the cytoplasm. It carries out the reaction Release of the N-terminal residue from a tripeptide.. In terms of biological role, cleaves the N-terminal amino acid of tripeptides. The sequence is that of Peptidase T from Parabacteroides distasonis (strain ATCC 8503 / DSM 20701 / CIP 104284 / JCM 5825 / NCTC 11152).